The primary structure comprises 133 residues: Small ribosomal subunit protein uS11 (133 aa).

Belongs to the universal ribosomal protein uS11 family. As to quaternary structure, part of the 30S ribosomal subunit. Interacts with proteins S7 and S18. Binds to IF-3.

Located on the platform of the 30S subunit, it bridges several disparate RNA helices of the 16S rRNA. Forms part of the Shine-Dalgarno cleft in the 70S ribosome. In Christiangramia forsetii (strain DSM 17595 / CGMCC 1.15422 / KT0803) (Gramella forsetii), this protein is Small ribosomal subunit protein uS11.